The sequence spans 139 residues: ATP synthase epsilon chain (139 aa).

The protein belongs to the ATPase epsilon chain family. As to quaternary structure, F-type ATPases have 2 components, CF(1) - the catalytic core - and CF(0) - the membrane proton channel. CF(1) has five subunits: alpha(3), beta(3), gamma(1), delta(1), epsilon(1). CF(0) has three main subunits: a, b and c.

Its subcellular location is the cell membrane. Produces ATP from ADP in the presence of a proton gradient across the membrane. In Pediococcus pentosaceus (strain ATCC 25745 / CCUG 21536 / LMG 10740 / 183-1w), this protein is ATP synthase epsilon chain.